A 118-amino-acid polypeptide reads, in one-letter code: MTVNIYDNANEMASVLKETEQYTAWQNAFNAIQADEEAKQLFTKFQSVQVAVQQMMQSQQQPSADQEKEWDAIAADVQKNELITALLSTEQALNTLLTEINDIVTKPVADAYAKLRQK.

This sequence belongs to the UPF0342 family.

This is UPF0342 protein LCK_01004 from Leuconostoc citreum (strain KM20).